We begin with the raw amino-acid sequence, 61 residues long: UPF0434 protein Pmen_1615 (61 aa).

It belongs to the UPF0434 family.

This chain is UPF0434 protein Pmen_1615, found in Ectopseudomonas mendocina (strain ymp) (Pseudomonas mendocina).